The chain runs to 71 residues: Antitoxin ParD2 (71 aa).

Its function is as follows. Antitoxin component of a type II toxin-antitoxin (TA) system. The polypeptide is Antitoxin ParD2 (parD2) (Mycobacterium tuberculosis (strain CDC 1551 / Oshkosh)).